A 369-amino-acid polypeptide reads, in one-letter code: MWPLWPLAALLALSQALPFEQKAFWDFTLDDGLPMLNDEEASGAETTSGIPDLDSLPPTYSAMCPFGCHCHLRVVQCSDLGLKAVPKEISPDTTLLDLQNNDISELRKDDFKGLQHLYALVLVNNKISKIHEKAFSPLRKLQKLYISKNHLVEIPPNLPSSLVELRIHDNRIRKVPKGVFSGLRNMNCIEMGGNPLENSGFEPGAFDGLKLNYLRISEAKLTGIPKDLPETLNELHLDHNKIQAIELEDLLRYSKLYRLGLGHNQIRMIENGSLSFLPTLRELHLDNNKLSRVPAGLPDLKLLQVVYLHTNNITKVGVNDFCPVGFGVKRAYYNGISLFNNPVPYWEVQPATFRCVTDRLAIQFGNYKK.

The N-terminal stretch at 1–16 is a signal peptide; that stretch reads MWPLWPLAALLALSQA. A propeptide spanning residues 17–37 is cleaved from the precursor; sequence LPFEQKAFWDFTLDDGLPMLN. 2 O-linked (Xyl...) (glycosaminoglycan) serine glycosylation sites follow: serine 42 and serine 48. 2 cysteine pairs are disulfide-bonded: cysteine 64/cysteine 70 and cysteine 68/cysteine 77. LRR repeat units follow at residues 83-103, 104-127, 128-151, 152-172, 173-196, 197-221, 222-242, 243-266, 267-290, 291-313, 314-343, and 344-369; these read KAVP…NNDI, SELR…NNKI, SKIH…KNHL, VEIP…DNRI, RKVP…GNPL, ENSG…EAKL, TGIP…HNKI, QAIE…HNQI, RMIE…NNKL, SRVP…TNNI, TKVG…NNPV, and PYWE…NYKK. O-linked (Xyl...) (glycosaminoglycan) serine glycans are attached at residues serine 181 and serine 199. 2 N-linked (GlcNAc...) asparagine glycosylation sites follow: asparagine 271 and asparagine 312. Cysteine 322 and cysteine 355 form a disulfide bridge.

This sequence belongs to the small leucine-rich proteoglycan (SLRP) family. SLRP class I subfamily. Homodimer. Forms a ternary complex with MFAP2 and ELN. Post-translationally, the two attached glycosaminoglycan chains can be either chondroitin sulfate or dermatan sulfate. Found in several connective tissues, especially in articular cartilages.

It is found in the secreted. It localises to the extracellular space. The protein resides in the extracellular matrix. May be involved in collagen fiber assembly. In Bos taurus (Bovine), this protein is Biglycan (BGN).